A 347-amino-acid polypeptide reads, in one-letter code: Sesquiterpene synthase M422DRAFT_47084 (347 aa).

Asp93, Asn228, Ser232, and Glu236 together coordinate Mg(2+). The short motif at 93–97 (DEYTD) is the DDXXD motif element. (2E,6E)-farnesyl diphosphate contacts are provided by Arg318 and Tyr319.

Belongs to the terpene synthase family. Mg(2+) is required as a cofactor.

The enzyme catalyses (2E,6E)-farnesyl diphosphate = viridiflorene + diphosphate. Its function is as follows. Terpene cyclase that catalyzes the cyclization of farnesyl diphosphate (FPP) to viridiflorene and viridiflorol. The sequence is that of Sesquiterpene synthase M422DRAFT_47084 from Sphaerobolus stellatus (strain SS14).